A 487-amino-acid polypeptide reads, in one-letter code: Acetylcholine receptor subunit beta-type acr-3 (487 aa).

The signal sequence occupies residues 1 to 20; sequence MQKIWLFSIITIFLITELQC. Topologically, residues 21-231 are extracellular; the sequence is YPNSAEERLL…KIRRKALFYT (211 aa). An N-linked (GlcNAc...) asparagine glycan is attached at N46. A disulfide bond links C151 and C165. 3 consecutive transmembrane segments (helical) span residues 232–252, 259–279, and 294–314; these read VILIMPTVLMAFLSMMVFYLP, ITLAISILLALVVFLLVVSKI, and LLMTFIMNMITIMVSVIIINV. The Cytoplasmic portion of the chain corresponds to 315–439; sequence YFRGPATHIM…WKFVSVVIDR (125 aa). The segment at 380-400 is disordered; that stretch reads ISEQPKQTSRKDGSSSEEKLS. Residues 440 to 460 form a helical membrane-spanning segment; the sequence is LLLYLFFAVTTGGTVGILLSA.

This sequence belongs to the ligand-gated ion channel (TC 1.A.9) family. Acetylcholine receptor (TC 1.A.9.1) subfamily. Component of nicotinic acetylcholine receptor. In cholinergic motoneurons, composed of 2 non-alpha subunits acr-2 and acr-3, and 3 alpha subunits unc-38, unc-63 and acr-12.

It is found in the postsynaptic cell membrane. It localises to the cell membrane. Non-alpha subunit of nicotinic acetylcholine receptor (nAChR). Probably acts in cholinergic motoneurons to regulate presynaptic neurotransmitter release, thereby ensuring normal level of excitation of cholinergic motoneurons during locomotion. The sequence is that of Acetylcholine receptor subunit beta-type acr-3 (acr-3) from Caenorhabditis elegans.